The primary structure comprises 378 residues: Glutamate 5-kinase 1 (378 aa).

An ATP-binding site is contributed by Lys13. Residues Ser53, Asp140, and Asn152 each contribute to the substrate site. 172–173 serves as a coordination point for ATP; that stretch reads SD. Residues 278–355 form the PUA domain; sequence AGRLTVDAGA…AEIETVLGYE (78 aa).

The protein belongs to the glutamate 5-kinase family.

It localises to the cytoplasm. It carries out the reaction L-glutamate + ATP = L-glutamyl 5-phosphate + ADP. It participates in amino-acid biosynthesis; L-proline biosynthesis; L-glutamate 5-semialdehyde from L-glutamate: step 1/2. Catalyzes the transfer of a phosphate group to glutamate to form L-glutamate 5-phosphate. This chain is Glutamate 5-kinase 1, found in Mesorhizobium japonicum (strain LMG 29417 / CECT 9101 / MAFF 303099) (Mesorhizobium loti (strain MAFF 303099)).